The chain runs to 116 residues: U3-theraphotoxin-Lsp1a (116 aa).

The first 17 residues, 1-17 (MKLSTFIIMISLAVALA), serve as a signal peptide directing secretion. Positions 18–50 (TWPSEHIEGSDSETKLNVELGPYALADRAEKGK) are excised as a propeptide.

This sequence belongs to the neurotoxin 25 family. F7 subfamily. In terms of processing, contains 3 disulfide bonds. As to expression, expressed by the venom gland.

It is found in the secreted. The chain is U3-theraphotoxin-Lsp1a from Lasiodora sp. (strain IBSP 8539) (Brazilian salmon pink birdeater).